A 399-amino-acid polypeptide reads, in one-letter code: Glycerate 2-kinase (399 aa).

K48 contributes to the substrate binding site.

It belongs to the glycerate kinase type-1 family. As to quaternary structure, homodimer. Mg(2+) is required as a cofactor. The cofactor is Ni(2+). It depends on Mn(2+) as a cofactor. Requires Co(2+) as cofactor. Ca(2+) serves as cofactor. Zn(2+) is required as a cofactor. The cofactor is Sr(2+).

The catalysed reaction is (R)-glycerate + ATP = (2R)-2-phosphoglycerate + ADP + H(+). Its function is as follows. Catalyzes the ATP-dependent phosphorylation of D-glycerate to 2-phosphoglycerate. It can also utilize GTP, CTP, UTP, ADP, AMP or pyrophosphate as phosphate donor. The protein is Glycerate 2-kinase (gck) of Sulfurisphaera tokodaii (strain DSM 16993 / JCM 10545 / NBRC 100140 / 7) (Sulfolobus tokodaii).